The primary structure comprises 773 residues: 4'-phosphopantetheine phosphatase (773 aa).

Position 2 is an N-acetylalanine (Ala-2). Residues 2–402 (AECRASGGGS…APELCPTQRA (401 aa)) form a pantothenate kinase region. Residues Ser-196 and Ser-199 each contribute to the acetyl-CoA site. 3'-nitrotyrosine is present on Tyr-320. Residues 403–773 (RSGTFDLLEM…VIFKYEVPAE (371 aa)) form a 4'-phosphopantetheine phosphatase region. Ser-404 is subject to Phosphoserine. Thr-406 is subject to Phosphothreonine. Residues Asp-623, Asn-624, and Asp-659 each contribute to the Mn(2+) site. The Subfamily II EGMGR motif motif lies at 724–728 (EGMGR).

It in the N-terminal section; belongs to the type II pantothenate kinase family. This sequence in the C-terminal section; belongs to the damage-control phosphatase family. Phosphopantetheine phosphatase (II) subfamily. Homodimer. Interacts with PKM. Requires Mn(2+) as cofactor. Ni(2+) serves as cofactor.

The protein resides in the cytoplasm. It catalyses the reaction (R)-4'-phosphopantetheine + H2O = (R)-pantetheine + phosphate. The enzyme catalyses (R)-4'-phosphopantetheine sulfonate + H2O = (R)-pantetheine sulfonate + phosphate. The catalysed reaction is (R)-4'-phospho-S-sulfopantetheine + H2O = (R)-S-sulfopantetheine + phosphate. With respect to regulation, activity is strongly promoted by Co(2+), Ni(2+), Mg(2+) and Mn(2+). Activity is inhibited by EDTA. In terms of biological role, phosphatase which shows a preference for 4'-phosphopantetheine and its oxidatively damaged forms (sulfonate or S-sulfonate), providing strong indirect evidence that the phosphatase activity pre-empts damage in the coenzyme A (CoA) pathway. Hydrolyzing excess 4'-phosphopantetheine could constitute a directed overflow mechanism to prevent its oxidation to the S-sulfonate, sulfonate, or other forms. Hydrolyzing 4'-phosphopantetheine sulfonate or S-sulfonate would forestall their conversion to inactive forms of CoA and acyl carrier protein. May play a role in the physiological regulation of CoA intracellular levels. The polypeptide is 4'-phosphopantetheine phosphatase (Rattus norvegicus (Rat)).